Here is a 155-residue protein sequence, read N- to C-terminus: Endoribonuclease YbeY (155 aa).

Zn(2+) contacts are provided by His-114, His-118, and His-124.

The protein belongs to the endoribonuclease YbeY family. The cofactor is Zn(2+).

It localises to the cytoplasm. Functionally, single strand-specific metallo-endoribonuclease involved in late-stage 70S ribosome quality control and in maturation of the 3' terminus of the 16S rRNA. This is Endoribonuclease YbeY from Cronobacter sakazakii (strain ATCC BAA-894) (Enterobacter sakazakii).